Reading from the N-terminus, the 348-residue chain is MSKQTLILLYGGRSAEREVSVLSAESVMRAVDYTKFFVKTYFISQTGQFIKTQEFSSRPTLTERLMTNDTIRLEQQIRPSDIYEEGAVVFPVLHGPMGEDGSIQGFLEVLRMPYVGTNILSSSVAMDKITTKRVLESAGIPQVAYTVYIEGQDLDRCLAETEAALSYPVFVKPANMGSSVGISKAESEEELRAAILLALTYDSRILIEQGVLAREIEVGLLGNTDVKSTLPGEVVKNVDFYDYQAKYIDNEITMAIPATIDESAMTSMRIYAETAFKAIGACGLSRCDFFLGQDGQIYLNELNTMPGFTQWSMYPLLWEHMGLNYAELIEELVRLAQEMFEKREGHLI.

The ATP-grasp domain occupies 132-334 (KRVLESAGIP…YAELIEELVR (203 aa)). ATP is bound at residue 162-217 (EAALSYPVFVKPANMGSSVGISKAESEEELRAAILLALTYDSRILIEQGVLAREIE). Mg(2+) contacts are provided by Asp-288, Glu-301, and Asn-303.

This sequence belongs to the D-alanine--D-alanine ligase family. Mg(2+) serves as cofactor. It depends on Mn(2+) as a cofactor.

It localises to the cytoplasm. It catalyses the reaction 2 D-alanine + ATP = D-alanyl-D-alanine + ADP + phosphate + H(+). It functions in the pathway cell wall biogenesis; peptidoglycan biosynthesis. Its function is as follows. Cell wall formation. The polypeptide is D-alanine--D-alanine ligase (Streptococcus equi subsp. zooepidemicus (strain H70)).